An 83-amino-acid chain; its full sequence is Large ribosomal subunit protein eL14 (83 aa).

The protein belongs to the eukaryotic ribosomal protein eL14 family.

The polypeptide is Large ribosomal subunit protein eL14 (Thermococcus onnurineus (strain NA1)).